The chain runs to 593 residues: NADH-quinone oxidoreductase subunit C/D (593 aa).

The tract at residues 1 to 184 (MTADNAIFIP…DPYSLTLAKQ (184 aa)) is NADH dehydrogenase I subunit C. The interval 208–593 (DYMFLNLGPN…IDFVMADVDR (386 aa)) is NADH dehydrogenase I subunit D.

It in the N-terminal section; belongs to the complex I 30 kDa subunit family. In the C-terminal section; belongs to the complex I 49 kDa subunit family. In terms of assembly, NDH-1 is composed of 13 different subunits. Subunits NuoB, CD, E, F, and G constitute the peripheral sector of the complex.

The protein resides in the cell inner membrane. It carries out the reaction a quinone + NADH + 5 H(+)(in) = a quinol + NAD(+) + 4 H(+)(out). NDH-1 shuttles electrons from NADH, via FMN and iron-sulfur (Fe-S) centers, to quinones in the respiratory chain. The immediate electron acceptor for the enzyme in this species is believed to be ubiquinone. Couples the redox reaction to proton translocation (for every two electrons transferred, four hydrogen ions are translocated across the cytoplasmic membrane), and thus conserves the redox energy in a proton gradient. The chain is NADH-quinone oxidoreductase subunit C/D from Pseudomonas putida (strain ATCC 700007 / DSM 6899 / JCM 31910 / BCRC 17059 / LMG 24140 / F1).